The sequence spans 276 residues: Rhomboid protease GlpG (276 aa).

6 consecutive transmembrane segments (helical) span residues 94–114, 142–162, 169–189, 192–212, 229–249, and 250–270; these read GPVT…MSLI, IFMH…WYLG, LGSG…GYVQ, FSGP…GYVW, LIIF…GMSM, and ANGA…VDTL. S201 (nucleophile) is an active-site residue. H254 is a catalytic residue.

It belongs to the peptidase S54 family.

The protein localises to the cell inner membrane. It catalyses the reaction Cleaves type-1 transmembrane domains using a catalytic dyad composed of serine and histidine that are contributed by different transmembrane domains.. Its function is as follows. Rhomboid-type serine protease that catalyzes intramembrane proteolysis. This Salmonella agona (strain SL483) protein is Rhomboid protease GlpG.